Reading from the N-terminus, the 355-residue chain is Elongation factor Ts (355 aa).

Residues 82 to 85 (TDFV) form an involved in Mg(2+) ion dislocation from EF-Tu region.

Belongs to the EF-Ts family.

It is found in the cytoplasm. In terms of biological role, associates with the EF-Tu.GDP complex and induces the exchange of GDP to GTP. It remains bound to the aminoacyl-tRNA.EF-Tu.GTP complex up to the GTP hydrolysis stage on the ribosome. This is Elongation factor Ts (tsf) from Helicobacter pylori (strain J99 / ATCC 700824) (Campylobacter pylori J99).